Here is a 98-residue protein sequence, read N- to C-terminus: Histone H4-like protein type G (98 aa).

The DNA-binding element occupies 17 to 21 (KCHRK).

The protein belongs to the histone H4 family. In terms of assembly, the nucleosome is a histone octamer containing two molecules each of H2A, H2B, H3 and H4 assembled in one H3-H4 heterotetramer and two H2A-H2B heterodimers. The octamer wraps approximately 147 bp of DNA.

The protein resides in the nucleus. It localises to the chromosome. In terms of biological role, core component of nucleosome. Nucleosomes wrap and compact DNA into chromatin, limiting DNA accessibility to the cellular machineries which require DNA as a template. Histones thereby play a central role in transcription regulation, DNA repair, DNA replication and chromosomal stability. DNA accessibility is regulated via a complex set of post-translational modifications of histones, also called histone code, and nucleosome remodeling. In Homo sapiens (Human), this protein is Histone H4-like protein type G.